The primary structure comprises 403 residues: Para-nitrophenol 4-monooxygenase (403 aa).

FAD contacts are provided by residues 6 to 35 (GVVV…VLEA) and 279 to 289 (FRRGRVVLAGD).

The protein belongs to the PheA/TfdB FAD monooxygenase family. As to quaternary structure, monomer. It depends on FAD as a cofactor.

It carries out the reaction 4-nitrophenol + NADPH + O2 + H(+) = 1,4-benzoquinone + nitrite + NADP(+) + H2O. The protein operates within xenobiotic degradation; 4-nitrophenol degradation. Its function is as follows. Involved in the degradation of para-nitrophenol (4-NP). Catalyzes oxidation of 4-nitrophenol (4-NP) at position 4 with concomitant removal of the nitro group as nitrite and production of para-benzoquinone. This chain is Para-nitrophenol 4-monooxygenase (pnpA), found in Pseudomonas sp. (strain WBC-3).